The primary structure comprises 397 residues: Succinate--CoA ligase [ADP-forming] subunit beta (397 aa).

The 246-residue stretch at 9 to 254 (KALLKGYGAP…ETEEDAKEIE (246 aa)) folds into the ATP-grasp domain. Residues lysine 46, 53-55 (GRG), glutamate 109, alanine 112, and glutamate 117 contribute to the ATP site. Residues asparagine 209 and aspartate 223 each contribute to the Mg(2+) site. Substrate is bound by residues asparagine 274 and 331–333 (GIM).

This sequence belongs to the succinate/malate CoA ligase beta subunit family. As to quaternary structure, heterotetramer of two alpha and two beta subunits. It depends on Mg(2+) as a cofactor.

The enzyme catalyses succinate + ATP + CoA = succinyl-CoA + ADP + phosphate. It carries out the reaction GTP + succinate + CoA = succinyl-CoA + GDP + phosphate. It functions in the pathway carbohydrate metabolism; tricarboxylic acid cycle; succinate from succinyl-CoA (ligase route): step 1/1. Its function is as follows. Succinyl-CoA synthetase functions in the citric acid cycle (TCA), coupling the hydrolysis of succinyl-CoA to the synthesis of either ATP or GTP and thus represents the only step of substrate-level phosphorylation in the TCA. The beta subunit provides nucleotide specificity of the enzyme and binds the substrate succinate, while the binding sites for coenzyme A and phosphate are found in the alpha subunit. The protein is Succinate--CoA ligase [ADP-forming] subunit beta of Rhizobium leguminosarum bv. trifolii (strain WSM2304).